Reading from the N-terminus, the 141-residue chain is Protein wingless (141 aa).

S3 is lipidated: O-palmitoleoyl serine; by PORCN. Residues 40–49 are compositionally biased toward polar residues; the sequence is TDLEAPTQRN. Residues 40–61 form a disordered region; the sequence is TDLEAPTQRNDAAPHRAPRRER. Residues C107 and C122 are joined by a disulfide bond. 2 N-linked (GlcNAc...) asparagine glycosylation sites follow: N108 and N138.

The protein belongs to the Wnt family. Post-translationally, palmitoleoylated by porcupine. The lipid group functions as a sorting signal, targeting the ligand to polarized vesicles that transport wg to unique sites at the cell surface. Depalmitoleoylated by notum, leading to inhibit Wnt signaling pathway.

The protein localises to the secreted. It is found in the extracellular space. The protein resides in the extracellular matrix. Segment polarity protein. Binds to the frizzled seven-transmembrane receptors. This protein is probably a growth factor. The sequence is that of Protein wingless (WG) from Manduca sexta (Tobacco hawkmoth).